Consider the following 102-residue polypeptide: Large ribosomal subunit protein bL21 (102 aa).

Belongs to the bacterial ribosomal protein bL21 family. Part of the 50S ribosomal subunit. Contacts protein L20.

In terms of biological role, this protein binds to 23S rRNA in the presence of protein L20. This Sorangium cellulosum (strain So ce56) (Polyangium cellulosum (strain So ce56)) protein is Large ribosomal subunit protein bL21.